The chain runs to 243 residues: 35 kDa gas vesicle protein (243 aa).

This sequence belongs to the gas vesicle GvpC family.

The protein localises to the gas vesicle shell. Its function is as follows. May confer stability to the gas vesicle shells. Gas vesicles are small, hollow, gas filled protein structures that are found in several microbial planktonic microorganisms. They allow the positioning of the organism at the favorable depth for growth. The polypeptide is 35 kDa gas vesicle protein (Dactylococcopsis salina (strain PCC 8305) (Myxobactron salinum)).